We begin with the raw amino-acid sequence, 203 residues long: Microtubule-associated protein Jupiter (203 aa).

Residue serine 30 is modified to Phosphoserine. Residues threonine 41 and threonine 102 each carry the phosphothreonine modification. Residues 123–132 (LISKGNYNGK) show a composition bias toward polar residues. Disordered regions lie at residues 123 to 163 (LISK…GNPV) and 182 to 203 (NGGSQVINKNRVPPGGYSSGLW). Residues 133–146 (SGSVSSASSSVSSS) are compositionally biased toward low complexity. Phosphoserine occurs at positions 135 and 146.

This sequence belongs to the MAP Jupiter family.

The protein resides in the nucleus. It is found in the cytoplasm. Its subcellular location is the cytoskeleton. The protein localises to the spindle. In terms of biological role, binds to all microtubule populations. In Drosophila mojavensis (Fruit fly), this protein is Microtubule-associated protein Jupiter.